An 89-amino-acid chain; its full sequence is Small ribosomal subunit protein uS14 (89 aa).

The protein belongs to the universal ribosomal protein uS14 family. In terms of assembly, part of the 30S ribosomal subunit. Contacts proteins S3 and S10.

In terms of biological role, binds 16S rRNA, required for the assembly of 30S particles and may also be responsible for determining the conformation of the 16S rRNA at the A site. This Azobacteroides pseudotrichonymphae genomovar. CFP2 protein is Small ribosomal subunit protein uS14.